Here is a 561-residue protein sequence, read N- to C-terminus: Carbohydrate sulfotransferase 15 (561 aa).

Residues 1–80 (MRHCINCCVQ…FLRFRKGKRC (80 aa)) are Cytoplasmic-facing. Residues 81–101 (SLVFGLIIMTLVMASYILSGA) traverse the membrane as a helical; Signal-anchor for type II membrane protein segment. Residues 102–561 (HQELLISSPF…DDEAFAWKTT (460 aa)) are Lumenal-facing. 263–267 (KCGTT) contacts 3'-phosphoadenylyl sulfate. An N-linked (GlcNAc...) asparagine glycan is attached at Asn-364. Residues Arg-392 and Ser-400 each coordinate 3'-phosphoadenylyl sulfate.

The protein belongs to the sulfotransferase 1 family. As to quaternary structure, homodimer; disulfide-linked (Potential). The relevance of homodimerization is however unsure. May interact with phosphorylated proteins in resting B-cells, including HCK. Requires a divalent metal cation as cofactor. Glutathione is required as a cofactor. In terms of processing, glycosylated.

The protein resides in the golgi apparatus membrane. The enzyme catalyses dermatan 4'-sulfate + n 3'-phosphoadenylyl sulfate = dermatan 4',6'-bissulfate + n adenosine 3',5'-bisphosphate + n H(+). It catalyses the reaction chondroitin 4'-sulfate + n 3'-phosphoadenylyl sulfate = chondroitin 4',6'-bissulfate + n adenosine 3',5'-bisphosphate + n H(+). With respect to regulation, inhibited by phenyl beta-GalNAc(4,6-SO(4)). In terms of biological role, sulfotransferase that transfers sulfate from 3'-phosphoadenosine 5'-phosphosulfate (PAPS) to the C-6 hydroxyl group of the GalNAc 4-sulfate residue of chondroitin sulfate A and forms chondroitin sulfate E containing GlcA-GalNAc(4,6-SO(4)) repeating units. It also transfers sulfate to a unique non-reducing terminal sequence, GalNAc(4SO4)-GlcA(2SO4)-GalNAc(6SO4), to yield a highly sulfated structure similar to the structure found in thrombomodulin chondroitin sulfate. May also act as a B-cell receptor involved in BCR ligation-mediated early activation that mediate regulatory signals key to B-cell development and/or regulation of B-cell-specific RAG expression; however such results are unclear in vivo. This chain is Carbohydrate sulfotransferase 15 (Chst15), found in Mus musculus (Mouse).